Consider the following 252-residue polypeptide: Triosephosphate isomerase (252 aa).

Position 10-12 (10-12) interacts with substrate; sequence NWK. Residue histidine 96 is the Electrophile of the active site. Glutamate 168 (proton acceptor) is an active-site residue. Substrate-binding positions include glycine 174, serine 214, and 235-236; that span reads GG.

It belongs to the triosephosphate isomerase family. Homodimer.

The protein localises to the cytoplasm. It carries out the reaction D-glyceraldehyde 3-phosphate = dihydroxyacetone phosphate. The protein operates within carbohydrate biosynthesis; gluconeogenesis. It functions in the pathway carbohydrate degradation; glycolysis; D-glyceraldehyde 3-phosphate from glycerone phosphate: step 1/1. Functionally, involved in the gluconeogenesis. Catalyzes stereospecifically the conversion of dihydroxyacetone phosphate (DHAP) to D-glyceraldehyde-3-phosphate (G3P). The chain is Triosephosphate isomerase from Streptococcus pyogenes serotype M2 (strain MGAS10270).